Here is a 60-residue protein sequence, read N- to C-terminus: Potassium channel toxin alpha-KTx 29.2 (60 aa).

Residues 1-28 (MKSVCGVLIILVVLTTMLSISTFSTVGA) form the signal peptide. Disulfide bonds link C32–C51, C40–C56, and C44–C58.

Belongs to the short scorpion toxin superfamily. Potassium channel inhibitor family. Alpha-KTx 29 subfamily. In terms of tissue distribution, expressed by the venom gland.

Its subcellular location is the secreted. Its function is as follows. Weakly inhibits the Kv1.3/KCNA3 channel (1 uM of thetoxin inhibits currents by 13.2%) and Kv7.1/KCNQ1 channel (10 uM of the toxin inhibits currents by 27.7%). In Lychas mucronatus (Chinese swimming scorpion), this protein is Potassium channel toxin alpha-KTx 29.2.